We begin with the raw amino-acid sequence, 342 residues long: Phenylalanine--tRNA ligase alpha subunit (342 aa).

Glu255 serves as a coordination point for Mg(2+).

Belongs to the class-II aminoacyl-tRNA synthetase family. Phe-tRNA synthetase alpha subunit type 1 subfamily. In terms of assembly, tetramer of two alpha and two beta subunits. It depends on Mg(2+) as a cofactor.

The protein resides in the cytoplasm. It catalyses the reaction tRNA(Phe) + L-phenylalanine + ATP = L-phenylalanyl-tRNA(Phe) + AMP + diphosphate + H(+). The polypeptide is Phenylalanine--tRNA ligase alpha subunit (Pelotomaculum thermopropionicum (strain DSM 13744 / JCM 10971 / SI)).